A 378-amino-acid polypeptide reads, in one-letter code: Zinc transporter 7 (378 aa).

Topologically, residues 1 to 37 (MLPLSIKDDEYKPPRLNLFRKMSGWFRSILADKTSRN) are cytoplasmic. Residues 38-58 (LFFFLCLNLSFAFVELLYGVW) traverse the membrane as a helical segment. The Lumenal portion of the chain corresponds to 59 to 67 (SNSLGLISD). Residues 68–88 (SFHMFFDCTALLAGLAASVIS) form a helical membrane-spanning segment. The Cytoplasmic portion of the chain corresponds to 89–102 (KWRSNDAFSYGYVR). The chain crosses the membrane as a helical span at residues 103 to 123 (AEVLAGFVNGLFLIFTAFFIF). Residues 124 to 140 (SEGVERALEPPDVHHER) lie on the Lumenal side of the membrane. A helical transmembrane segment spans residues 141-161 (LLPVSILGFIVNLIGIFVFQH). A his-rich loop region spans residues 161-223 (HGGHGHSHGS…HGQDYCHDDH (63 aa)). Residues 162–238 (GGHGHSHGSG…TGSSKQILQG (77 aa)) lie on the Cytoplasmic side of the membrane. Residues 185–214 (HGHSHRGHGHSHEHKHGHTHDHGHSHGLSH) are disordered. Residues 186-211 (GHSHRGHGHSHEHKHGHTHDHGHSHG) are compositionally biased toward basic residues. The helical transmembrane segment at 239–259 (VFLHIVADTLGSIGVIISAIL) threads the bilayer. Topologically, residues 260-264 (MQNYG) are lumenal. The helical transmembrane segment at 265 to 285 (LMIADPICSMLIALLIGVSIV) threads the bilayer. Residues 286-378 (PLLKESIGIL…LYIQIDVAAM (93 aa)) lie on the Cytoplasmic side of the membrane.

The protein belongs to the cation diffusion facilitator (CDF) transporter (TC 2.A.4) family. SLC30A subfamily. As to quaternary structure, homooligomer.

Its subcellular location is the golgi apparatus membrane. The protein localises to the cytoplasmic vesicle. It localises to the golgi apparatus. It is found in the trans-Golgi network. The protein resides in the sarcoplasmic reticulum. Its subcellular location is the mitochondrion. The enzyme catalyses Zn(2+)(in) = Zn(2+)(out). Functionally, zinc ion transporter mediating zinc entry from the cytosol into the lumen of organelles along the secretory pathway. By contributing to zinc ion homeostasis within the early secretory pathway, regulates the activation and folding of enzymes like alkaline phosphatases. This Gallus gallus (Chicken) protein is Zinc transporter 7 (SLC30A7).